We begin with the raw amino-acid sequence, 1114 residues long: MEDFDLVENLQKTSPSVESDIKSAPQSLGLSLHANRSSPHLSTNGVSSFSGKTGPPVIQGTVEVLTALRQDLQNSGRTDSELWKSCERIQEEIRKLVKLQLSHASRPSCSSSSVSEQVSAETQMGFFSENSERNESVVSSPASKEPETQPASSTSYPDCHVDSSSVSSGYGTFCILDMNTHKAKEPTEPLEPGAASQGQHPASVVQAHGPAGGAAAINFFTQTPEELCASLKEDGSTFPGEFDRNFLGENKISEVYSGKANSGKSVTSWAQRLKQNQSKQAHTEDDCSGPKPGSELNWKPPADTFDLAADAARPCAFYINKPAESPSSWLSDSGTGLTYWKLEEKDMYHSLPETLEKTFAPSPAERPLSQVLTLDPGAIRMKPKEHVAGIQAHGFLHALDDRISFSPDSVLEPSLSRHSDTDSSSQASHNPSQVSGFSKYPSTTRASPVDTWKNHAFQRESRTSSTIPSRYTITSNDISVKTVDEENTVTVASVSQSQLPGTANSVPECISLASLEDPVMLSKIRQNLKEKHARHVADLRAYYESEISSLKQKLEAKDISAVEEWKKKNEILADRCGQLDSALNEATSRVRTLEKNNNLLEIEVSDLRERFNAASSASKVLQERIEEMRTSNKEKDNTITRLKCRLQDLEEAFENAYKLSDDKEARLRQENKMFQDLLGEYESLGKEHGRVKDTLNTTENKLLDAHTQISDLKRTISKLEAQVKQAEHESMLSLRNGAKVPERPSRSNSVATSDVSRRKWLIPGAEYSIFTGQPLDPRDRKLDKQLEEALVPGYHSPPEKDSSLGSSPASLLVKKKRDTPDTPPIIKALKELDEERVFKSWGTQTEKEDSSSKLVNSRQTEPSVNTGRSPEKCAQQRPKRQTSASQRSSSLPPSSRKANTPTKREIMLTPVTVAYSPKRSPKENLSPGFSHLLSKNESSPVRFDILLDDLDTVPVSTLQQTTAKKQLQFLLDDSEEKKYSEKNSDDPVNPSSCPEHSPNGLKKVSTRQAWEKSKSVSLEQCQPGSAAPQDNGFEYTAKIRTLAETERFFDELTKEKDQIEAALSRMPSPGGRITLQTRLNQEALEDRLEKINRELGSVRMTLKKFHVLRSSANL.

Disordered stretches follow at residues 1–55, 106–161, 183–207, 267–301, and 410–468; these read MEDF…KTGP, RPSC…DCHV, AKEPTEPLEPGAASQGQHPASVVQA, TSWAQRLKQNQSKQAHTEDDCSGPKPGSELNWKPP, and VLEP…STIP. The span at 24 to 51 shows a compositional bias: polar residues; that stretch reads APQSLGLSLHANRSSPHLSTNGVSSFSG. Residues 106–119 are compositionally biased toward low complexity; the sequence is RPSCSSSSVSEQVS. Polar residues predominate over residues 149–161; the sequence is QPASSTSYPDCHV. Polar residues-rich tracts occupy residues 267-280 and 429-446; these read TSWAQRLKQNQSKQ and HNPSQVSGFSKYPSTTRA. Positions 368 to 729 are required for its centrosomal localization; that stretch reads LSQVLTLDPG…EAQVKQAEHE (362 aa). Residues 382–431 form an interaction with CEP97 region; it reads KPKEHVAGIQAHGFLHALDDRISFSPDSVLEPSLSRHSDTDSSSQASHNP. Residues 574–733 adopt a coiled-coil conformation; sequence DRCGQLDSAL…KQAEHESMLS (160 aa). Position 710 is a phosphoserine; by TTBK2 (Ser710). Lys713 is covalently cross-linked (Glycyl lysine isopeptide (Lys-Gly) (interchain with G-Cter in ubiquitin)). Phosphoserine; by TTBK2 is present on Ser717. Disordered stretches follow at residues 727–755, 840–931, and 975–1002; these read EHESMLSLRNGAKVPERPSRSNSVATSDV, SWGT…GFSH, and EEKKYSEKNSDDPVNPSSCPEHSPNGLK. An interaction with KIF24 region spans residues 730 to 963; that stretch reads SMLSLRNGAK…PVSTLQQTTA (234 aa). Over residues 852 to 868 the composition is skewed to polar residues; it reads SKLVNSRQTEPSVNTGR. Residues 881–898 are compositionally biased toward low complexity; sequence QTSASQRSSSLPPSSRKA. Phosphoserine is present on Ser926. The segment covering 975-985 has biased composition (basic and acidic residues); that stretch reads EEKKYSEKNSD. The stretch at 1040–1105 forms a coiled coil; sequence RTLAETERFF…GSVRMTLKKF (66 aa).

Interacts with CCP110, CEP97 and KIF24. TTBK2-mediated phosphorylation at Ser-710 and Ser-717, promotes its ubiquitination at Lys-713 leading to proteasomal degradation, loss of MPHOSPH9 facilitates the removal of the CP110-CEP97 complex from the mother centrioles, promoting the initiation of ciliogenesis. Phosphorylated in M (mitotic) phase. Post-translationally, ubiquitinated at Lys-713, leading to proteasomal degradation.

It localises to the cytoplasm. The protein resides in the cytoskeleton. Its subcellular location is the microtubule organizing center. It is found in the centrosome. The protein localises to the centriole. It localises to the golgi apparatus membrane. Functionally, negatively regulates cilia formation by recruiting the CP110-CEP97 complex (a negative regulator of ciliogenesis) at the distal end of the mother centriole in ciliary cells. At the beginning of cilia formation, MPHOSPH9 undergoes TTBK2-mediated phosphorylation and degradation via the ubiquitin-proteasome system and removes itself and the CP110-CEP97 complex from the distal end of the mother centriole, which subsequently promotes cilia formation. This chain is M-phase phosphoprotein 9 (Mphosph9), found in Mus musculus (Mouse).